A 149-amino-acid chain; its full sequence is Large ribosomal subunit protein uL15 (149 aa).

The segment at H8 to A49 is disordered. Positions G31–K45 are enriched in low complexity.

It belongs to the universal ribosomal protein uL15 family. As to quaternary structure, part of the 50S ribosomal subunit.

Binds to the 23S rRNA. In Corynebacterium aurimucosum (strain ATCC 700975 / DSM 44827 / CIP 107346 / CN-1) (Corynebacterium nigricans), this protein is Large ribosomal subunit protein uL15.